The chain runs to 151 residues: Snaclec 3 (151 aa).

The signal sequence occupies residues 1–23 (MGRLVFVSFSLLVVFLSLSGTAA). Intrachain disulfides connect Cys25–Cys36, Cys53–Cys149, and Cys125–Cys141. The 119-residue stretch at 32-150 (YEGHCYKPFN…CGEINPFVCK (119 aa)) folds into the C-type lectin domain.

This sequence belongs to the snaclec family. Heterodimer; disulfide-linked. Expressed by the venom gland.

It localises to the secreted. Its function is as follows. Interferes with one step of hemostasis (modulation of platelet aggregation, or coagulation cascade, for example). This chain is Snaclec 3, found in Sistrurus catenatus edwardsii (Desert massasauga).